Consider the following 370-residue polypeptide: Protein-tyrosine sulfotransferase 1 (370 aa).

At 1–8 the chain is on the cytoplasmic side; the sequence is MVGKLKQN. A helical; Signal-anchor for type II membrane protein transmembrane segment spans residues 9–25; sequence LLLACLVISSVTVFYLG. The Lumenal portion of the chain corresponds to 26–370; sequence QHAMECHHRI…KEKPQTEQVE (345 aa). Asn-60 is a glycosylation site (N-linked (GlcNAc...) asparagine). 79–83 is a binding site for 3'-phosphoadenylyl sulfate; that stretch reads RSGTT. An intrachain disulfide couples Cys-97 to Cys-157. Glu-100 functions as the Proton donor/acceptor in the catalytic mechanism. An interaction with peptide substrate region spans residues 102-106; it reads RVIPR. 3 residues coordinate 3'-phosphoadenylyl sulfate: Arg-184, Ser-192, and Arg-196. A disulfide bridge links Cys-226 with Cys-234. Tyr-239 serves as a coordination point for 3'-phosphoadenylyl sulfate. Asn-262 is a glycosylation site (N-linked (GlcNAc...) asparagine). Residues 286-295 and Lys-301 each bind 3'-phosphoadenylyl sulfate; that span reads STDQVIKPVN.

It belongs to the protein sulfotransferase family. In terms of assembly, homodimer. Can also form heterodimers with TPST2. In terms of processing, N-glycosylated. In terms of tissue distribution, ubiquitous. Detected in heart, brain, lung, liver, spleen, kidney, skeletal muscle and testis.

It localises to the golgi apparatus membrane. The catalysed reaction is L-tyrosyl-[protein] + 3'-phosphoadenylyl sulfate = O-sulfo-L-tyrosine-[protein] + adenosine 3',5'-bisphosphate + H(+). In terms of biological role, catalyzes the O-sulfation of tyrosine residues within acidic motifs of polypeptides, using 3'-phosphoadenylyl sulfate (PAPS) as cosubstrate. The sequence is that of Protein-tyrosine sulfotransferase 1 (Tpst1) from Mus musculus (Mouse).